A 179-amino-acid polypeptide reads, in one-letter code: MSRIGKLPVAVPSGVDVAIDGARVTVKGPKGTLSHTVAAPITVEKGDGVLDVKRPDDERESKALHGLTRTLVNNMVVGVTEGYEKKLEIVGVGYRVLSKGPTQLEFQLGYSHPITFNAPEGITFAVEGPTRLGVQGIDKQLVGEVAANIRKLRKPEPYKGKGVRYAGEHIRRKVGKAGK.

It belongs to the universal ribosomal protein uL6 family. As to quaternary structure, part of the 50S ribosomal subunit.

Functionally, this protein binds to the 23S rRNA, and is important in its secondary structure. It is located near the subunit interface in the base of the L7/L12 stalk, and near the tRNA binding site of the peptidyltransferase center. This is Large ribosomal subunit protein uL6 from Nocardioides sp. (strain ATCC BAA-499 / JS614).